A 178-amino-acid chain; its full sequence is Large ribosomal subunit protein uL6c (178 aa).

It belongs to the universal ribosomal protein uL6 family. In terms of assembly, part of the 50S ribosomal subunit.

Its subcellular location is the plastid. The protein localises to the chloroplast. Its function is as follows. Binds 23S rRNA. The protein is Large ribosomal subunit protein uL6c (rpl6) of Phaeodactylum tricornutum (strain CCAP 1055/1).